We begin with the raw amino-acid sequence, 499 residues long: Sensor histidine kinase VxrA (499 aa).

The Cytoplasmic segment spans residues 1–12 (MRYSFCMLEKTN). Residues 13-31 (IPLIRALNLTLVSLCFAML) traverse the membrane as a helical segment. Residues 32-257 (PNPVHADSLP…ICWDVEDHSD (226 aa)) lie on the Periplasmic side of the membrane. 2 cysteine pairs are disulfide-bonded: Cys101–Cys122 and Cys241–Cys249. The chain crosses the membrane as a helical span at residues 258 to 280 (LLRTSMIILVIANIFLVLGWSGY). Topologically, residues 281 to 499 (RWNSKRQEMR…IPCETDTASR (219 aa)) are cytoplasmic. In terms of domain architecture, Histidine kinase spans 298-494 (ILTHELRTPI…TFILEIPCET (197 aa)). Residue His301 is modified to Phosphohistidine; by autocatalysis.

Homodimer. In terms of processing, autophosphorylated. Contains two disulfide bonds that may play a role in the stability of the protein. However, the disulfide bonds are not absolutely essential, as some activity and growth are detected in the absence of each disulfide bond.

Its subcellular location is the cell inner membrane. It catalyses the reaction ATP + protein L-histidine = ADP + protein N-phospho-L-histidine.. In terms of biological role, member of the two-component regulatory system VxrB/VxrA involved in the regulation of diverses processes, including virulence, the type VI secretion system (T6SS) and biofilm formation. Functions as a sensor protein kinase which is autophosphorylated at a histidine residue and transfers its phosphate group to the conserved aspartic acid residue in the regulatory domain of VxrB. Is critical for colonization in the infant mouse model. Contributes to the resistance to beta-lactam treatment. This Vibrio cholerae serotype O1 (strain ATCC 39315 / El Tor Inaba N16961) protein is Sensor histidine kinase VxrA.